A 161-amino-acid chain; its full sequence is Protein lin-52 (161 aa).

The disordered stretch occupies residues 137-161 (TGSASPRYLQPTPPKNVAEETTGSQ).

This sequence belongs to the lin-52 family. Component of the DRM complex, at least composed of lin-9, lin-35, lin-37, lin-52, lin-53, lin-54- dpl-1 and efl-1. Interacts with zft-11; the interaction is required to suppress the activation of non-neuronal genes in neurons.

It localises to the nucleus. Synthetic multivulva class B (synMuvB) protein. SynMuvB proteins are required to repress the induction of vulval development by Ras signaling and probably act by forming the multiprotein DRM complex that represses transcription. In association with the zinc finger protein ztf-11, negatively regulates the expression of non-neuronal genes during neurogenesis. This chain is Protein lin-52, found in Caenorhabditis elegans.